A 372-amino-acid polypeptide reads, in one-letter code: Cytochrome b (372 aa).

Helical transmembrane passes span 25-45, 69-90, 105-125, and 170-190; these read FGSMLLTCLALQTMTGFFLAI, WMMQNLHAIGASMFFICIYIHI, WLSGTTLLIILMATAFFGYVL, and FFALHFILPFTIISMSSIHIM. Heme b is bound by residues H75 and H89. Heme b contacts are provided by H174 and H188. H193 serves as a coordination point for a ubiquinone. 4 consecutive transmembrane segments (helical) span residues 218–238, 280–300, 312–332, and 339–358; these read HKDMLMLTIMMTALFIIMSFN, LGGAVALVLSVTILMTMPFTH, LMQFMFWTLVTTFIMITWAAT, and FTTIGQVTSILYFTFFIMNP.

This sequence belongs to the cytochrome b family. In terms of assembly, the cytochrome bc1 complex contains 3 respiratory subunits (MT-CYB, CYC1 and UQCRFS1), 2 core proteins (UQCRC1 and UQCRC2) and probably 6 low-molecular weight proteins. Heme b is required as a cofactor.

It is found in the mitochondrion inner membrane. Its function is as follows. Component of the ubiquinol-cytochrome c reductase complex (complex III or cytochrome b-c1 complex) that is part of the mitochondrial respiratory chain. The b-c1 complex mediates electron transfer from ubiquinol to cytochrome c. Contributes to the generation of a proton gradient across the mitochondrial membrane that is then used for ATP synthesis. This is Cytochrome b (MT-CYB) from Pantherophis bairdi (Baird's ratsnake).